The chain runs to 165 residues: 6,7-dimethyl-8-ribityllumazine synthase (165 aa).

5-amino-6-(D-ribitylamino)uracil-binding positions include tryptophan 26, 57-59, and 79-81; these read SVE and VVV. (2S)-2-hydroxy-3-oxobutyl phosphate is bound at residue 84–85; it reads AT. Histidine 87 functions as the Proton donor in the catalytic mechanism. Histidine 112 contributes to the 5-amino-6-(D-ribitylamino)uracil binding site. Residue arginine 126 coordinates (2S)-2-hydroxy-3-oxobutyl phosphate.

The protein belongs to the DMRL synthase family.

It catalyses the reaction (2S)-2-hydroxy-3-oxobutyl phosphate + 5-amino-6-(D-ribitylamino)uracil = 6,7-dimethyl-8-(1-D-ribityl)lumazine + phosphate + 2 H2O + H(+). It functions in the pathway cofactor biosynthesis; riboflavin biosynthesis; riboflavin from 2-hydroxy-3-oxobutyl phosphate and 5-amino-6-(D-ribitylamino)uracil: step 1/2. Functionally, catalyzes the formation of 6,7-dimethyl-8-ribityllumazine by condensation of 5-amino-6-(D-ribitylamino)uracil with 3,4-dihydroxy-2-butanone 4-phosphate. This is the penultimate step in the biosynthesis of riboflavin. The sequence is that of 6,7-dimethyl-8-ribityllumazine synthase from Salinispora arenicola (strain CNS-205).